We begin with the raw amino-acid sequence, 165 residues long: Peptide methionine sulfoxide reductase MsrA (165 aa).

Residue C10 is part of the active site.

It belongs to the MsrA Met sulfoxide reductase family.

The catalysed reaction is L-methionyl-[protein] + [thioredoxin]-disulfide + H2O = L-methionyl-(S)-S-oxide-[protein] + [thioredoxin]-dithiol. It carries out the reaction [thioredoxin]-disulfide + L-methionine + H2O = L-methionine (S)-S-oxide + [thioredoxin]-dithiol. Its function is as follows. Has an important function as a repair enzyme for proteins that have been inactivated by oxidation. Catalyzes the reversible oxidation-reduction of methionine sulfoxide in proteins to methionine. The polypeptide is Peptide methionine sulfoxide reductase MsrA (Campylobacter jejuni subsp. jejuni serotype O:23/36 (strain 81-176)).